Reading from the N-terminus, the 218-residue chain is Serine/threonine-protein phosphatase 1 (218 aa).

Residues Asp24, His26, Asp53, and Asn79 each contribute to the Mn(2+) site. The active-site Proton donor is His80. Mn(2+) is bound at residue His187.

Belongs to the PPP phosphatase family. PP-1 subfamily. The cofactor is Mn(2+).

The catalysed reaction is O-phospho-L-seryl-[protein] + H2O = L-seryl-[protein] + phosphate. It carries out the reaction O-phospho-L-threonyl-[protein] + H2O = L-threonyl-[protein] + phosphate. In terms of biological role, plays a key role in signaling protein misfolding via the CpxR/CPXA transducing system. It also modulates the phosphorylated status of many phosphoproteins in E.coli, some of which acting as major chaperones. Has been shown, in vitro, to act on Ser, Thr and Tyr-phosphorylated substrates. This chain is Serine/threonine-protein phosphatase 1 (pphA), found in Escherichia coli (strain K12).